A 390-amino-acid polypeptide reads, in one-letter code: Succinyl-diaminopimelate desuccinylase (390 aa).

Residue H74 coordinates Zn(2+). Residue D76 is part of the active site. D107 is a binding site for Zn(2+). The active-site Proton acceptor is the E140. Zn(2+)-binding residues include E141, E169, and H363.

The protein belongs to the peptidase M20A family. DapE subfamily. Homodimer. Requires Zn(2+) as cofactor. It depends on Co(2+) as a cofactor.

The enzyme catalyses N-succinyl-(2S,6S)-2,6-diaminopimelate + H2O = (2S,6S)-2,6-diaminopimelate + succinate. Its pathway is amino-acid biosynthesis; L-lysine biosynthesis via DAP pathway; LL-2,6-diaminopimelate from (S)-tetrahydrodipicolinate (succinylase route): step 3/3. Functionally, catalyzes the hydrolysis of N-succinyl-L,L-diaminopimelic acid (SDAP), forming succinate and LL-2,6-diaminopimelate (DAP), an intermediate involved in the bacterial biosynthesis of lysine and meso-diaminopimelic acid, an essential component of bacterial cell walls. The protein is Succinyl-diaminopimelate desuccinylase of Bartonella quintana (strain Toulouse) (Rochalimaea quintana).